A 182-amino-acid polypeptide reads, in one-letter code: Large ribosomal subunit protein uL5 (182 aa).

Belongs to the universal ribosomal protein uL5 family. In terms of assembly, part of the 50S ribosomal subunit; part of the 5S rRNA/L5/L18/L25 subcomplex. Contacts the 5S rRNA and the P site tRNA. Forms a bridge to the 30S subunit in the 70S ribosome.

This is one of the proteins that bind and probably mediate the attachment of the 5S RNA into the large ribosomal subunit, where it forms part of the central protuberance. In the 70S ribosome it contacts protein S13 of the 30S subunit (bridge B1b), connecting the 2 subunits; this bridge is implicated in subunit movement. Contacts the P site tRNA; the 5S rRNA and some of its associated proteins might help stabilize positioning of ribosome-bound tRNAs. In Mycoplasma mobile (strain ATCC 43663 / 163K / NCTC 11711) (Mesomycoplasma mobile), this protein is Large ribosomal subunit protein uL5.